The chain runs to 209 residues: Regulator of G-protein signaling 1 (209 aa).

The 116-residue stretch at S85–L200 folds into the RGS domain.

Interacts with GNAI1 and GNAQ. Detected in peripheral blood monocytes. Expression is relatively low in B-cells and chronic lymphocytic leukemia B-cells; however, in other types of malignant B-cell such as non-Hodgkin lymphoma and hairy cell leukemia, expression is constitutively high.

The protein localises to the cell membrane. It localises to the cytoplasm. Its subcellular location is the cytosol. Its function is as follows. Regulates G protein-coupled receptor signaling cascades, including signaling downstream of the N-formylpeptide chemoattractant receptors and leukotriene receptors. Inhibits B cell chemotaxis toward CXCL12. Inhibits signal transduction by increasing the GTPase activity of G protein alpha subunits thereby driving them into their inactive GDP-bound form. In Homo sapiens (Human), this protein is Regulator of G-protein signaling 1 (RGS1).